The chain runs to 396 residues: Dimethyladenosine transferase 2, mitochondrial (396 aa).

A mitochondrion-targeting transit peptide spans Met-1–Phe-43. The segment at Phe-43 to Thr-71 is disordered. Residues Ile-74, Glu-123, and Asp-149 each contribute to the S-adenosyl-L-methionine site. The DNA-binding stretch occupies residues Lys-328–Arg-329.

It belongs to the class I-like SAM-binding methyltransferase superfamily. rRNA adenine N(6)-methyltransferase family. KsgA subfamily. Homodimer. Component of the mitochondrial transcription initiation complex, composed at least of TFB2M, TFAM and POLRMT. In this complex TFAM recruits POLRMT to the promoter whereas TFB2M induces structural changes in POLRMT to enable promoter opening and trapping of the DNA non-template strand. Interacts with mitochondrial RNA polymerase POLRMT. Interacts with TFAM. As to expression, ubiquitously expressed.

Its subcellular location is the mitochondrion. The enzyme catalyses adenosine in rRNA + S-adenosyl-L-methionine = N(6)-methyladenosine in rRNA + S-adenosyl-L-homocysteine + H(+). Functionally, S-adenosyl-L-methionine-dependent rRNA methyltransferase which may methylate two specific adjacent adenosines in the loop of a conserved hairpin near the 3'-end of 12S mitochondrial rRNA. Component of the mitochondrial transcription initiation complex, composed at least of TFB2M, TFAM and POLRMT that is required for basal transcription of mitochondrial DNA. In this complex, TFAM recruits POLRMT to a specific promoter whereas TFB2M induces structural changes in POLRMT to enable promoter opening and trapping of the DNA non-template strand. Stimulates transcription independently of the methyltransferase activity. This is Dimethyladenosine transferase 2, mitochondrial from Mus musculus (Mouse).